A 155-amino-acid polypeptide reads, in one-letter code: Endoribonuclease YbeY (155 aa).

Zn(2+) is bound by residues His114, His118, and His124.

Belongs to the endoribonuclease YbeY family. Requires Zn(2+) as cofactor.

It is found in the cytoplasm. In terms of biological role, single strand-specific metallo-endoribonuclease involved in late-stage 70S ribosome quality control and in maturation of the 3' terminus of the 16S rRNA. This Proteus mirabilis (strain HI4320) protein is Endoribonuclease YbeY.